Consider the following 314-residue polypeptide: Mitochondrial 2-oxoglutarate/malate carrier protein (314 aa).

Residue Ala2 is modified to N-acetylalanine. Phosphoserine is present on Ser6. Solcar repeat units follow at residues 23 to 108 (VKFL…LFER), 117 to 208 (PGFL…SKQF), and 217 to 306 (DNIL…MNKA). The chain crosses the membrane as a helical span at residues 24–42 (KFLFGGLAGMGATVFVQPL). Lys57 bears the N6-succinyllysine mark. Residues 83–101 (GLSAGLLRQATYTTTRLGI) form a helical membrane-spanning segment. Tyr102 is modified (phosphotyrosine). Helical transmembrane passes span 119 to 140 (FLLKAVIGMTAGATGAFVGTPA), 183 to 202 (GCIPTMARAVVVNAAQLASY), and 222 to 240 (HFCASMISGLVTTAASMPV). Lys256 carries the N6-acetyllysine modification. The chain crosses the membrane as a helical span at residues 281-300 (GFTPYYARLGPHTVLTFIFL).

The protein belongs to the mitochondrial carrier (TC 2.A.29) family. Interacts with SMIM26. Post-translationally, the N-terminus is blocked. Heart, liver and brain.

It is found in the mitochondrion inner membrane. The enzyme catalyses (S)-malate(in) + 2-oxoglutarate(out) = (S)-malate(out) + 2-oxoglutarate(in). The catalysed reaction is malonate(in) + 2-oxoglutarate(out) = malonate(out) + 2-oxoglutarate(in). It catalyses the reaction succinate(in) + 2-oxoglutarate(out) = succinate(out) + 2-oxoglutarate(in). It carries out the reaction maleate(in) + 2-oxoglutarate(out) = maleate(out) + 2-oxoglutarate(in). The enzyme catalyses oxaloacetate(in) + 2-oxoglutarate(out) = oxaloacetate(out) + 2-oxoglutarate(in). In terms of biological role, catalyzes the transport of 2-oxoglutarate (alpha-oxoglutarate) across the inner mitochondrial membrane in an electroneutral exchange for malate. Can also exchange 2-oxoglutarate for other dicarboxylic acids such as malonate, succinate, maleate and oxaloacetate, although with lower affinity. Contributes to several metabolic processes, including the malate-aspartate shuttle, the oxoglutarate/isocitrate shuttle, in gluconeogenesis from lactate, and in nitrogen metabolism. Maintains mitochondrial fusion and fission events, and the organization and morphology of cristae. Involved in the regulation of apoptosis. Helps protect from cytotoxic-induced apoptosis by modulating glutathione levels in mitochondria. The polypeptide is Mitochondrial 2-oxoglutarate/malate carrier protein (SLC25A11) (Bos taurus (Bovine)).